The chain runs to 391 residues: Testis-expressed protein 9 (391 aa).

Disordered stretches follow at residues 1 to 31 and 65 to 85; these read MAGRSLCLTRSSVPGTPFPPPVQQPSTPGPD and QEVRSRPVSTQMKSCDDEDDY. Residues 188 to 351 adopt a coiled-coil conformation; the sequence is IGTEAQIRFL…EKQKGELMIG (164 aa).

The protein localises to the cytoplasm. Its subcellular location is the cytoskeleton. The protein resides in the microtubule organizing center. It is found in the centrosome. It localises to the centriolar satellite. This is Testis-expressed protein 9 (TEX9) from Homo sapiens (Human).